We begin with the raw amino-acid sequence, 504 residues long: Probable cytosol aminopeptidase (504 aa).

Mn(2+) is bound by residues Lys-276 and Asp-281. Lys-288 is a catalytic residue. Mn(2+)-binding residues include Asp-299, Asp-358, and Glu-360. Arg-362 is a catalytic residue.

It belongs to the peptidase M17 family. The cofactor is Mn(2+).

The protein localises to the cytoplasm. It carries out the reaction Release of an N-terminal amino acid, Xaa-|-Yaa-, in which Xaa is preferably Leu, but may be other amino acids including Pro although not Arg or Lys, and Yaa may be Pro. Amino acid amides and methyl esters are also readily hydrolyzed, but rates on arylamides are exceedingly low.. It catalyses the reaction Release of an N-terminal amino acid, preferentially leucine, but not glutamic or aspartic acids.. In terms of biological role, presumably involved in the processing and regular turnover of intracellular proteins. Catalyzes the removal of unsubstituted N-terminal amino acids from various peptides. The chain is Probable cytosol aminopeptidase from Bordetella avium (strain 197N).